We begin with the raw amino-acid sequence, 547 residues long: Chaperonin GroEL (547 aa).

Residues T30 to P33, K51, D87 to T91, G415, and D495 each bind ATP.

The protein belongs to the chaperonin (HSP60) family. In terms of assembly, forms a cylinder of 14 subunits composed of two heptameric rings stacked back-to-back. Interacts with the co-chaperonin GroES.

It localises to the cytoplasm. It catalyses the reaction ATP + H2O + a folded polypeptide = ADP + phosphate + an unfolded polypeptide.. Its function is as follows. Together with its co-chaperonin GroES, plays an essential role in assisting protein folding. The GroEL-GroES system forms a nano-cage that allows encapsulation of the non-native substrate proteins and provides a physical environment optimized to promote and accelerate protein folding. In Allorhizobium ampelinum (strain ATCC BAA-846 / DSM 112012 / S4) (Agrobacterium vitis (strain S4)), this protein is Chaperonin GroEL.